The primary structure comprises 224 residues: ATP synthase subunit a (224 aa).

The next 6 helical transmembrane spans lie at 17–37 (FIYMTHMLLAAGIALMLVKMA), 78–98 (LVATIGLFVGIANLIGVVPGF), 104–124 (FLEFAFTLALSVFIYYNYEGI), 136–156 (FLGPVWWLYWLMFPIEIVSHF), 176–196 (FLMVILMLAPWVLPMIPYALL), and 201–221 (FLQAFIFMMLTYVYLGSAIAV).

Belongs to the ATPase A chain family. As to quaternary structure, F-type ATPases have 2 components, CF(1) - the catalytic core - and CF(0) - the membrane proton channel. CF(1) has five subunits: alpha(3), beta(3), gamma(1), delta(1), epsilon(1). CF(0) has three main subunits: a(1), b(2) and c(9-12). The alpha and beta chains form an alternating ring which encloses part of the gamma chain. CF(1) is attached to CF(0) by a central stalk formed by the gamma and epsilon chains, while a peripheral stalk is formed by the delta and b chains.

The protein localises to the cell inner membrane. Key component of the proton channel; it plays a direct role in the translocation of protons across the membrane. The sequence is that of ATP synthase subunit a from Sulfurimonas denitrificans (strain ATCC 33889 / DSM 1251) (Thiomicrospira denitrificans (strain ATCC 33889 / DSM 1251)).